Here is a 342-residue protein sequence, read N- to C-terminus: N-acetyl-gamma-glutamyl-phosphate reductase (342 aa).

C147 is an active-site residue.

It belongs to the NAGSA dehydrogenase family. Type 1 subfamily.

It localises to the cytoplasm. The enzyme catalyses N-acetyl-L-glutamate 5-semialdehyde + phosphate + NADP(+) = N-acetyl-L-glutamyl 5-phosphate + NADPH + H(+). Its pathway is amino-acid biosynthesis; L-arginine biosynthesis; N(2)-acetyl-L-ornithine from L-glutamate: step 3/4. Its function is as follows. Catalyzes the NADPH-dependent reduction of N-acetyl-5-glutamyl phosphate to yield N-acetyl-L-glutamate 5-semialdehyde. The chain is N-acetyl-gamma-glutamyl-phosphate reductase from Campylobacter jejuni subsp. jejuni serotype O:23/36 (strain 81-176).